Consider the following 270-residue polypeptide: 4-hydroxy-tetrahydrodipicolinate reductase (270 aa).

Residues 9–14 and glutamate 35 each bind NAD(+); that span reads GAGGRM. NADP(+) is bound at residue arginine 36. Residues 99–101 and 123–126 contribute to the NAD(+) site; these read GTT and ASNY. Histidine 156 functions as the Proton donor/acceptor in the catalytic mechanism. (S)-2,3,4,5-tetrahydrodipicolinate is bound at residue histidine 157. Lysine 160 functions as the Proton donor in the catalytic mechanism. 166–167 serves as a coordination point for (S)-2,3,4,5-tetrahydrodipicolinate; that stretch reads GT.

The protein belongs to the DapB family.

Its subcellular location is the cytoplasm. The enzyme catalyses (S)-2,3,4,5-tetrahydrodipicolinate + NAD(+) + H2O = (2S,4S)-4-hydroxy-2,3,4,5-tetrahydrodipicolinate + NADH + H(+). The catalysed reaction is (S)-2,3,4,5-tetrahydrodipicolinate + NADP(+) + H2O = (2S,4S)-4-hydroxy-2,3,4,5-tetrahydrodipicolinate + NADPH + H(+). Its pathway is amino-acid biosynthesis; L-lysine biosynthesis via DAP pathway; (S)-tetrahydrodipicolinate from L-aspartate: step 4/4. In terms of biological role, catalyzes the conversion of 4-hydroxy-tetrahydrodipicolinate (HTPA) to tetrahydrodipicolinate. This is 4-hydroxy-tetrahydrodipicolinate reductase from Actinobacillus succinogenes (strain ATCC 55618 / DSM 22257 / CCUG 43843 / 130Z).